The chain runs to 314 residues: MSDTVTDGDASRRRHGRVVVVYGGRSAEREVSLLSGGAVLASLVRSGVDAHGFDFAGGGLSGLEALAPDRVFIAMHGRDGEDGSLQGALELLGIPYTGSGVLASALGMDKERTKQLWRAHGLPTPESVMLEGEPDWDAVIEALGLPLIVKPVHEGSTIGISIVETRDALIAAHAEASRFDSAIMAERFVQGEEYTVSLLGDEVLPAIRVEVPSGFYDYEAKYHSDTTRYLLPCGLEQEEERMLGDVCRRAFEAIGGRGWGRVDVMRDAQGRFWLLEVNTVPGMTDHSLVPQAAAHAGLDFDALVLRILDTTTGS.

In terms of domain architecture, ATP-grasp spans 114 to 309; it reads KQLWRAHGLP…FDALVLRILD (196 aa). Position 140–195 (140–195) interacts with ATP; the sequence is IEALGLPLIVKPVHEGSTIGISIVETRDALIAAHAEASRFDSAIMAERFVQGEEYT. The Mg(2+) site is built by Asp263, Glu276, and Asn278.

Belongs to the D-alanine--D-alanine ligase family. The cofactor is Mg(2+). Requires Mn(2+) as cofactor.

It is found in the cytoplasm. The enzyme catalyses 2 D-alanine + ATP = D-alanyl-D-alanine + ADP + phosphate + H(+). It participates in cell wall biogenesis; peptidoglycan biosynthesis. Functionally, cell wall formation. This Chromohalobacter salexigens (strain ATCC BAA-138 / DSM 3043 / CIP 106854 / NCIMB 13768 / 1H11) protein is D-alanine--D-alanine ligase.